A 220-amino-acid chain; its full sequence is MQLSRYIDHTLLKPEAQTAQIEKLCAEAKEHNFFSVCVNTSYVKTCAELLKDSSVKVCCVVGFPLGAMDTTSKAFETKTAIANGAQEIDMVIQIGALKDRRLDYVRDDIKAVVQAANGHTVKVIIETSLLNQEDKTLACKAALEAGAHFVKTSTGFGGGGATVDDVKLMKSVVGSSMEVKASGGIKDAQQAKSMIDAGATRLGTSSGITIIQGGSVQGGY.

Catalysis depends on aspartate 89, which acts as the Proton donor/acceptor. The Schiff-base intermediate with acetaldehyde role is filled by lysine 151. Lysine 180 functions as the Proton donor/acceptor in the catalytic mechanism.

This sequence belongs to the DeoC/FbaB aldolase family. DeoC type 1 subfamily.

It localises to the cytoplasm. It carries out the reaction 2-deoxy-D-ribose 5-phosphate = D-glyceraldehyde 3-phosphate + acetaldehyde. Its pathway is carbohydrate degradation; 2-deoxy-D-ribose 1-phosphate degradation; D-glyceraldehyde 3-phosphate and acetaldehyde from 2-deoxy-alpha-D-ribose 1-phosphate: step 2/2. In terms of biological role, catalyzes a reversible aldol reaction between acetaldehyde and D-glyceraldehyde 3-phosphate to generate 2-deoxy-D-ribose 5-phosphate. This is Deoxyribose-phosphate aldolase from Bdellovibrio bacteriovorus (strain ATCC 15356 / DSM 50701 / NCIMB 9529 / HD100).